We begin with the raw amino-acid sequence, 915 residues long: Copper-exporting P-type ATPase (915 aa).

HMA domains lie at 11–72 and 73–134; these read NHFA…YQGG and TEQT…YQAI. Residues C22, C25, C84, and C87 each contribute to the Cu(+) site. The tract at residues 142–169 is disordered; sequence FAPAASIDEKETDTPDAENSSNTEATEA. Over residues 158–169 the composition is skewed to polar residues; sequence AENSSNTEATEA. One can recognise an HMA 3 domain in the interval 172–236; that stretch reads QTLSLLIKGM…AIQSSGYQAE (65 aa). 2 residues coordinate Cu(+): C183 and C186. 7 helical membrane passes run 265 to 285, 293 to 313, 329 to 349, 359 to 379, 474 to 494, 514 to 534, and 541 to 561; these read LGIA…NMMI, VWGG…RHFF, TLVA…VAWP, VYFE…YIET, LVIT…IQMV, VFVP…YLYG, and YMLV…LGLA. The 4-aspartylphosphate intermediate role is filled by D598. The Mg(2+) site is built by D796 and D800. Transmembrane regions (helical) follow at residues 801 to 821 and 865 to 885; these read APAL…DVAI and IPIA…PVVA.

It belongs to the cation transport ATPase (P-type) (TC 3.A.3) family. Type IB subfamily.

It localises to the cell membrane. It carries out the reaction Cu(+)(in) + ATP + H2O = Cu(+)(out) + ADP + phosphate + H(+). Its function is as follows. Involved in copper export. The sequence is that of Copper-exporting P-type ATPase (copA) from Vibrio cholerae serotype O1 (strain ATCC 39315 / El Tor Inaba N16961).